We begin with the raw amino-acid sequence, 365 residues long: LIM and cysteine-rich domains protein 1 (365 aa).

The residue at position 16 (Ser-16) is a Phosphoserine. The PET domain occupies 99–206 (MIMTNPIATG…GEVALPGQGG (108 aa)). Residues 200-235 (ALPGQGGLPKEEGKQQEKPEGAETTAATTNGSLSDP) are disordered. Basic and acidic residues predominate over residues 208 to 220 (PKEEGKQQEKPEG). 2 LIM zinc-binding domains span residues 241–306 (YVCE…SLRP) and 307–365 (RCSG…SKRS).

In terms of assembly, interacts with GATA1 and GATA4. Interacts with beta-dystroglycan. Interacts with GATA6. As to expression, expressed in the heart (at protein level). Expressed in many tissues with highest abundance in skeletal muscle.

It is found in the cytoplasm. It localises to the nucleus. In terms of biological role, transcriptional cofactor that restricts GATA6 function by inhibiting DNA-binding, resulting in repression of GATA6 transcriptional activation of downstream target genes. Represses GATA6-mediated trans activation of lung- and cardiac tissue-specific promoters. Inhibits DNA-binding by GATA4 and GATA1 to the cTNC promoter. Plays a critical role in the development of cardiac hypertrophy via activation of calcineurin/nuclear factor of activated T-cells signaling pathway. This is LIM and cysteine-rich domains protein 1 (LMCD1) from Homo sapiens (Human).